Here is a 479-residue protein sequence, read N- to C-terminus: Zinc metalloproteinase/disintegrin PMMP-1 (479 aa).

The signal sequence occupies residues 1–20 (MIQVLLVTICLAVFPYQGSS). The propeptide occupies 21 to 188 (IILESGNVND…PIKKASKLVV (168 aa)). A Peptidase M12B domain is found at 194–390 (RYVELVIVAD…HNPQCILNKP (197 aa)). Cystine bridges form between Cys305–Cys385, Cys345–Cys369, and Cys347–Cys352. Residue His330 participates in Zn(2+) binding. Glu331 is a catalytic residue. Zn(2+) is bound by residues His334 and His339. N-linked (GlcNAc...) asparagine glycosylation occurs at Asn368. A propeptide spanning residues 391–408 (LRTDTVSTPVSGNELLEA) is cleaved from the precursor. In terms of domain architecture, Disintegrin spans 398–479 (TPVSGNELLE…ADCPRNGLYG (82 aa)). Intrachain disulfides connect Cys412–Cys427, Cys414–Cys422, Cys421–Cys444, Cys435–Cys441, Cys440–Cys465, and Cys453–Cys472. The Cell attachment site motif lies at 457–459 (RGD).

This sequence belongs to the venom metalloproteinase (M12B) family. P-II subfamily. P-IIa sub-subfamily. As to quaternary structure, monomer. Zn(2+) serves as cofactor. Expressed by the venom gland.

The protein localises to the secreted. Its function is as follows. Impairs hemostasis in the envenomed animal. In terms of biological role, inhibits platelet aggregation. The polypeptide is Zinc metalloproteinase/disintegrin PMMP-1 (Protobothrops mucrosquamatus (Taiwan habu)).